A 380-amino-acid polypeptide reads, in one-letter code: Glucose-1-phosphate adenylyltransferase (380 aa).

Alpha-D-glucose 1-phosphate-binding positions include Gly-164, 179–180, and Ser-190; that span reads EK.

The protein belongs to the bacterial/plant glucose-1-phosphate adenylyltransferase family. As to quaternary structure, homotetramer.

It catalyses the reaction alpha-D-glucose 1-phosphate + ATP + H(+) = ADP-alpha-D-glucose + diphosphate. The protein operates within glycan biosynthesis; glycogen biosynthesis. Its function is as follows. Involved in the biosynthesis of ADP-glucose, a building block required for the elongation reactions to produce glycogen. Catalyzes the reaction between ATP and alpha-D-glucose 1-phosphate (G1P) to produce pyrophosphate and ADP-Glc. The polypeptide is Glucose-1-phosphate adenylyltransferase (Streptococcus pneumoniae (strain 70585)).